Consider the following 944-residue polypeptide: Thyroid peroxidase (944 aa).

An N-terminal signal peptide occupies residues 1–30 (MVGLVPAGSAWGGRALAVLGVTLLVALARG). Residues 31 to 858 (LLPFFLGGRD…SGRLPKASLV (828 aa)) are Extracellular-facing. Asn-141 is a glycosylation site (N-linked (GlcNAc...) asparagine). Cys-154 and Cys-170 are joined by a disulfide. Asp-250 serves as a coordination point for heme b. His-251 serves as the catalytic Proton acceptor. Asp-252 is a binding site for Ca(2+). Disulfide bonds link Cys-271-Cys-281 and Cys-275-Cys-295. Asn-316 carries N-linked (GlcNAc...) asparagine glycosylation. Ca(2+) is bound by residues Thr-330, Phe-332, Asp-334, and Ser-336. N-linked (GlcNAc...) asparagine glycosylation occurs at Asn-351. The heme b site is built by Glu-408 and His-503. Disulfide bonds link Cys-606-Cys-663, Cys-704-Cys-729, Cys-750-Cys-790, Cys-776-Cys-802, Cys-808-Cys-822, Cys-816-Cys-831, and Cys-833-Cys-846. Asn-623 carries an N-linked (GlcNAc...) asparagine glycan. Residues 748–804 (DACGLPDSLDNGDVVLCGEAGRRVLVFSCRHGFKLQGPEQVACSPRGGAVRAPVCRD) enclose the Sushi domain. Residues 804–847 (DINECEDASHPPCHGSARCRNTKGGFRCECTDPAVLGEDGTTCV) form the EGF-like; calcium-binding domain. Residues 859 to 879 (SIALGIVLVVGLAGLTWTLVC) form a helical membrane-spanning segment. Over 880-944 (RWAHAGRKAS…RSHVAQGSPA (65 aa)) the chain is Cytoplasmic. The tract at residues 895–944 (LGGRGAPPPGRGAGQDGASGSLVPPLGPQGRTRAVDPTSSRSHVAQGSPA) is disordered. Polar residues predominate over residues 931–944 (PTSSRSHVAQGSPA).

This sequence belongs to the peroxidase family. XPO subfamily. As to quaternary structure, interacts with DUOX1, DUOX2 and CYBA. Ca(2+) is required as a cofactor. Requires heme b as cofactor. Heme is covalently bound through a H(2)O(2)-dependent autocatalytic process. Heme insertion is important for the delivery of protein at the cell surface. Post-translationally, cleaved in its N-terminal part.

It localises to the membrane. It catalyses the reaction 2 iodide + H2O2 + 2 H(+) = diiodine + 2 H2O. The enzyme catalyses [thyroglobulin]-L-tyrosine + iodide + H2O2 + H(+) = [thyroglobulin]-3-iodo-L-tyrosine + 2 H2O. The catalysed reaction is [thyroglobulin]-3-iodo-L-tyrosine + iodide + H2O2 + H(+) = [thyroglobulin]-3,5-diiodo-L-tyrosine + 2 H2O. It carries out the reaction 2 [thyroglobulin]-3,5-diiodo-L-tyrosine + H2O2 = [thyroglobulin]-L-thyroxine + [thyroglobulin]-dehydroalanine + 2 H2O. It catalyses the reaction [thyroglobulin]-3-iodo-L-tyrosine + [thyroglobulin]-3,5-diiodo-L-tyrosine + H2O2 = [thyroglobulin]-3,3',5-triiodo-L-thyronine + [thyroglobulin]-dehydroalanine + 2 H2O. It participates in hormone biosynthesis; thyroid hormone biosynthesis. Iodination and coupling of the hormonogenic tyrosines in thyroglobulin to yield the thyroid hormones T(3) and T(4). This is Thyroid peroxidase (TPO) from Canis lupus familiaris (Dog).